The following is a 373-amino-acid chain: Dual-specificity RNA methyltransferase RlmN (373 aa).

The active-site Proton acceptor is the glutamate 94. The 240-residue stretch at 100–339 folds into the Radical SAM core domain; that stretch reads EDDRATLCVS…VIVRKTRGDD (240 aa). Cysteine 107 and cysteine 344 form a disulfide bridge. Residues cysteine 114, cysteine 118, and cysteine 121 each contribute to the [4Fe-4S] cluster site. S-adenosyl-L-methionine is bound by residues 168–169, serine 200, 222–224, and asparagine 301; these read GE and SIH. The active-site S-methylcysteine intermediate is the cysteine 344.

This sequence belongs to the radical SAM superfamily. RlmN family. Requires [4Fe-4S] cluster as cofactor.

Its subcellular location is the cytoplasm. The enzyme catalyses adenosine(2503) in 23S rRNA + 2 reduced [2Fe-2S]-[ferredoxin] + 2 S-adenosyl-L-methionine = 2-methyladenosine(2503) in 23S rRNA + 5'-deoxyadenosine + L-methionine + 2 oxidized [2Fe-2S]-[ferredoxin] + S-adenosyl-L-homocysteine. It catalyses the reaction adenosine(37) in tRNA + 2 reduced [2Fe-2S]-[ferredoxin] + 2 S-adenosyl-L-methionine = 2-methyladenosine(37) in tRNA + 5'-deoxyadenosine + L-methionine + 2 oxidized [2Fe-2S]-[ferredoxin] + S-adenosyl-L-homocysteine. Specifically methylates position 2 of adenine 2503 in 23S rRNA and position 2 of adenine 37 in tRNAs. m2A2503 modification seems to play a crucial role in the proofreading step occurring at the peptidyl transferase center and thus would serve to optimize ribosomal fidelity. The protein is Dual-specificity RNA methyltransferase RlmN of Shewanella baltica (strain OS185).